The chain runs to 868 residues: Paladin (868 aa).

A lipid anchor (N-myristoyl glycine) is attached at G2.

Belongs to the paladin family.

The protein resides in the cytoplasm. Its subcellular location is the cytosol. In Gallus gallus (Chicken), this protein is Paladin (PALD1).